The primary structure comprises 207 residues: Large ribosomal subunit protein bL20 (207 aa).

The segment at 117-161 is disordered; the sequence is QETQPQPEEKTSLQPEKVLSTELSEEKSDDTLETKPQTTQVKAKK. Positions 140 to 149 are enriched in basic and acidic residues; it reads SEEKSDDTLE.

This sequence belongs to the bacterial ribosomal protein bL20 family.

Functionally, binds directly to 23S ribosomal RNA and is necessary for the in vitro assembly process of the 50S ribosomal subunit. It is not involved in the protein synthesizing functions of that subunit. This is Large ribosomal subunit protein bL20 from Onion yellows phytoplasma (strain OY-M).